The following is a 241-amino-acid chain: Probable transcriptional regulatory protein NE0210 (241 aa).

This sequence belongs to the TACO1 family.

The protein localises to the cytoplasm. The polypeptide is Probable transcriptional regulatory protein NE0210 (Nitrosomonas europaea (strain ATCC 19718 / CIP 103999 / KCTC 2705 / NBRC 14298)).